Reading from the N-terminus, the 525-residue chain is 2-isopropylmalate synthase (525 aa).

A Pyruvate carboxyltransferase domain is found at 12–274 (VVIFDTTLRD…WNKIDTTQLT (263 aa)). Asp21, His209, His211, and Asn245 together coordinate Mn(2+). Residues 398 to 525 (KLLSLSVIAG…GHGASAAAAS (128 aa)) are regulatory domain.

Belongs to the alpha-IPM synthase/homocitrate synthase family. LeuA type 1 subfamily. Homodimer. Requires Mn(2+) as cofactor.

It is found in the cytoplasm. The catalysed reaction is 3-methyl-2-oxobutanoate + acetyl-CoA + H2O = (2S)-2-isopropylmalate + CoA + H(+). It participates in amino-acid biosynthesis; L-leucine biosynthesis; L-leucine from 3-methyl-2-oxobutanoate: step 1/4. In terms of biological role, catalyzes the condensation of the acetyl group of acetyl-CoA with 3-methyl-2-oxobutanoate (2-ketoisovalerate) to form 3-carboxy-3-hydroxy-4-methylpentanoate (2-isopropylmalate). The sequence is that of 2-isopropylmalate synthase from Bradyrhizobium sp. (strain ORS 278).